Consider the following 449-residue polypeptide: Rubisco accumulation factor 1.2, chloroplastic (449 aa).

The N-terminal 61 residues, 1–61, are a transit peptide targeting the chloroplast; sequence MFSLKSLISS…NMIPKNPPAR (61 aa). The interval 75–264 is N-terminal alpha-helix; that stretch reads IPTQFRSLDS…KAKNRLNTEL (190 aa). The stretch at 262–288 forms a coiled coil; sequence TELYGDKEAEKEKEKKKKEEEVKAIRI. The C-terminal beta sheet stretch occupies residues 288–434; the sequence is IPVVRLKFGE…GMVVLVVRPP (147 aa).

This sequence belongs to the RAF family. Homodimer.

The protein localises to the plastid. Its subcellular location is the chloroplast. In terms of biological role, required for assembly or stability of RuBisCO. Acts at a postchaperonin step to fold and/or assemble the large subunit (rbcL) into RuBisCO. RAF1 brackets an rbcL dimer (rbcL(2)), leading to rbcL(8)-RAF1(4) complex formation. In the next step, RBCS displaces RAF1, thus resulting in holoenzyme formation. This is Rubisco accumulation factor 1.2, chloroplastic from Arabidopsis thaliana (Mouse-ear cress).